Consider the following 98-residue polypeptide: Co-chaperonin GroES (98 aa).

Belongs to the GroES chaperonin family. Heptamer of 7 subunits arranged in a ring. Interacts with the chaperonin GroEL.

It is found in the cytoplasm. Its function is as follows. Together with the chaperonin GroEL, plays an essential role in assisting protein folding. The GroEL-GroES system forms a nano-cage that allows encapsulation of the non-native substrate proteins and provides a physical environment optimized to promote and accelerate protein folding. GroES binds to the apical surface of the GroEL ring, thereby capping the opening of the GroEL channel. This Bartonella quintana (strain Toulouse) (Rochalimaea quintana) protein is Co-chaperonin GroES.